Consider the following 253-residue polypeptide: Adenosylcobinamide-GDP ribazoletransferase (253 aa).

A run of 4 helical transmembrane segments spans residues 33–53 (ISPLIIGISLALIESAVYVLL), 106–126 (IGSGGIGLLLVYLSIQIVALL), 132–152 (FYTIFHLISSNVLSMTIGLYI), and 178–198 (VLLLELIPFISLYNIIVFLVF).

It belongs to the CobS family. Mg(2+) is required as a cofactor.

It is found in the cell membrane. It carries out the reaction alpha-ribazole + adenosylcob(III)inamide-GDP = adenosylcob(III)alamin + GMP + H(+). It catalyses the reaction alpha-ribazole 5'-phosphate + adenosylcob(III)inamide-GDP = adenosylcob(III)alamin 5'-phosphate + GMP + H(+). Its pathway is cofactor biosynthesis; adenosylcobalamin biosynthesis; adenosylcobalamin from cob(II)yrinate a,c-diamide: step 7/7. In terms of biological role, joins adenosylcobinamide-GDP and alpha-ribazole to generate adenosylcobalamin (Ado-cobalamin). Also synthesizes adenosylcobalamin 5'-phosphate from adenosylcobinamide-GDP and alpha-ribazole 5'-phosphate. This Saccharolobus islandicus (strain Y.G.57.14 / Yellowstone #1) (Sulfolobus islandicus) protein is Adenosylcobinamide-GDP ribazoletransferase.